Here is a 331-residue protein sequence, read N- to C-terminus: Phosphate acyltransferase (331 aa).

Belongs to the PlsX family. As to quaternary structure, homodimer. Probably interacts with PlsY.

It localises to the cytoplasm. It carries out the reaction a fatty acyl-[ACP] + phosphate = an acyl phosphate + holo-[ACP]. It functions in the pathway lipid metabolism; phospholipid metabolism. In terms of biological role, catalyzes the reversible formation of acyl-phosphate (acyl-PO(4)) from acyl-[acyl-carrier-protein] (acyl-ACP). This enzyme utilizes acyl-ACP as fatty acyl donor, but not acyl-CoA. This is Phosphate acyltransferase from Lactococcus lactis subsp. lactis (strain IL1403) (Streptococcus lactis).